The sequence spans 105 residues: uncharacterized protein (105 aa).

2 consecutive transmembrane segments (helical) span residues 7–26 and 30–52; these read VLSVISVFSAAALVYRWLSL and VDMTVIFFATLLIASLTLLLISI.

The protein resides in the cell membrane. This is an uncharacterized protein from Archaeoglobus fulgidus (strain ATCC 49558 / DSM 4304 / JCM 9628 / NBRC 100126 / VC-16).